The sequence spans 305 residues: Ubiquinone biosynthesis protein COQ4 homolog, mitochondrial (305 aa).

H150, D151, H154, and E166 together coordinate Zn(2+).

It belongs to the COQ4 family. Component of a multi-subunit COQ enzyme complex. Zn(2+) is required as a cofactor.

It is found in the mitochondrion inner membrane. The catalysed reaction is a 4-hydroxy-3-methoxy-5-(all-trans-polyprenyl)benzoate + H(+) = a 2-methoxy-6-(all-trans-polyprenyl)phenol + CO2. It functions in the pathway cofactor biosynthesis; ubiquinone biosynthesis. Lyase that catalyzes the C1-decarboxylation of 4-hydroxy-3-methoxy-5-(all-trans-polyprenyl)benzoic acid into 2-methoxy-6-(all-trans-polyprenyl)phenol during ubiquinone biosynthesis. This Cryptosporidium parvum (strain Iowa II) protein is Ubiquinone biosynthesis protein COQ4 homolog, mitochondrial.